Reading from the N-terminus, the 470-residue chain is Ribulose bisphosphate carboxylase large chain (470 aa).

Substrate-binding residues include asparagine 115 and threonine 165. Catalysis depends on lysine 167, which acts as the Proton acceptor. Residue lysine 169 participates in substrate binding. Lysine 193, aspartate 195, and glutamate 196 together coordinate Mg(2+). Lysine 193 bears the N6-carboxylysine mark. Histidine 286 acts as the Proton acceptor in catalysis. Residues arginine 287, histidine 319, and serine 371 each contribute to the substrate site.

It belongs to the RuBisCO large chain family. Type I subfamily. In terms of assembly, heterohexadecamer of 8 large chains and 8 small chains. Forms a CsoS2-CsoS1-RuBisCO complex. It depends on Mg(2+) as a cofactor.

It localises to the carboxysome. The catalysed reaction is 2 (2R)-3-phosphoglycerate + 2 H(+) = D-ribulose 1,5-bisphosphate + CO2 + H2O. It catalyses the reaction D-ribulose 1,5-bisphosphate + O2 = 2-phosphoglycolate + (2R)-3-phosphoglycerate + 2 H(+). In terms of biological role, ruBisCO catalyzes two reactions: the carboxylation of D-ribulose 1,5-bisphosphate, the primary event in carbon dioxide fixation, as well as the oxidative fragmentation of the pentose substrate in the photorespiration process. Both reactions occur simultaneously and in competition at the same active site. The sequence is that of Ribulose bisphosphate carboxylase large chain from Prochlorococcus marinus (strain MIT 9313).